A 64-amino-acid chain; its full sequence is Small ribosomal subunit protein bS21 (64 aa).

Residues 40-64 (PPSVKRKIKSQEAQRRMRRTKRKRF) are disordered. Residues 55-64 (RMRRTKRKRF) are compositionally biased toward basic residues.

The protein belongs to the bacterial ribosomal protein bS21 family.

The chain is Small ribosomal subunit protein bS21 from Elusimicrobium minutum (strain Pei191).